Here is a 766-residue protein sequence, read N- to C-terminus: Subtilisin-like protease SBT3.13 (766 aa).

The signal sequence occupies residues 1-21 (MNNSLQSSKLVLLLAIALVLF). A propeptide spans 22-120 (LNTELDFLTA…VIPNRIRKLK (99 aa)) (activation peptide). In terms of domain architecture, Inhibitor I9 spans 41–119 (VYIVYLGERE…HVIPNRIRKL (79 aa)). In terms of domain architecture, Peptidase S8 spans 134-618 (PTSFSSLSSV…GGLVNPEKAA (485 aa)). The Charge relay system role is filled by Asp-162. N-linked (GlcNAc...) asparagine glycosylation is found at Asn-195 and Asn-223. His-239 acts as the Charge relay system in catalysis. Asn-254 and Asn-389 each carry an N-linked (GlcNAc...) asparagine glycan. The active-site Charge relay system is the Ser-549. The N-linked (GlcNAc...) asparagine glycan is linked to Asn-641.

The protein belongs to the peptidase S8 family.

It localises to the secreted. This Arabidopsis thaliana (Mouse-ear cress) protein is Subtilisin-like protease SBT3.13.